A 660-amino-acid polypeptide reads, in one-letter code: Translation factor GUF1 homolog, mitochondrial (660 aa).

In terms of domain architecture, tr-type G spans 62–243 (EKIRNFSIIA…TIIEKIPPPT (182 aa)). GTP is bound by residues 71–78 (AHIDHGKS), 136–140 (DTPGH), and 190–193 (NKID).

Belongs to the TRAFAC class translation factor GTPase superfamily. Classic translation factor GTPase family. LepA subfamily.

It localises to the mitochondrion inner membrane. The enzyme catalyses GTP + H2O = GDP + phosphate + H(+). Its function is as follows. Promotes mitochondrial protein synthesis. May act as a fidelity factor of the translation reaction, by catalyzing a one-codon backward translocation of tRNAs on improperly translocated ribosomes. Binds to mitochondrial ribosomes in a GTP-dependent manner. In Trichoplax adhaerens (Trichoplax reptans), this protein is Translation factor GUF1 homolog, mitochondrial.